We begin with the raw amino-acid sequence, 354 residues long: Uroporphyrinogen decarboxylase (354 aa).

Substrate-binding positions include 27–31 (RQAGR), Asp-77, Tyr-154, Thr-209, and His-327.

This sequence belongs to the uroporphyrinogen decarboxylase family. As to quaternary structure, homodimer.

Its subcellular location is the cytoplasm. It catalyses the reaction uroporphyrinogen III + 4 H(+) = coproporphyrinogen III + 4 CO2. It participates in porphyrin-containing compound metabolism; protoporphyrin-IX biosynthesis; coproporphyrinogen-III from 5-aminolevulinate: step 4/4. Its function is as follows. Catalyzes the decarboxylation of four acetate groups of uroporphyrinogen-III to yield coproporphyrinogen-III. In Pseudomonas entomophila (strain L48), this protein is Uroporphyrinogen decarboxylase.